The chain runs to 524 residues: uncharacterized protein (524 aa).

An N-terminal signal peptide occupies residues 1 to 26 (MLKIDMWFKLKSLGFSLISLQALLAS). The N-palmitoyl cysteine moiety is linked to residue Cys27. Cys27 is lipidated: S-diacylglycerol cysteine. A disordered region spans residues 37 to 68 (IEEKNDSTTDNNATPFKDEQSDQGTEVNQQPK). The span at 58–68 (DQGTEVNQQPK) shows a compositional bias: polar residues.

This sequence belongs to the MG067/MG068/MG395 family.

It localises to the cell membrane. This is an uncharacterized protein from Mycoplasma genitalium (strain ATCC 33530 / DSM 19775 / NCTC 10195 / G37) (Mycoplasmoides genitalium).